The following is a 224-amino-acid chain: Menaquinol:cytochrome c reductase cytochrome b subunit (224 aa).

Residues 37 to 57 (FSAFVYCFGGLTFFVTVIQIL) form a helical membrane-spanning segment. Y42 is a heme b binding site. Residue C43 participates in heme c binding. The heme b site is built by R91, H94, H108, and R111. Helical transmembrane passes span 96–116 (WGAS…FFQG), 126–146 (WIVG…GYLL), and 195–215 (IHVF…FLMI). 2 residues coordinate heme b: H196 and H211. Heme c contacts are provided by R216 and I220. Heme b is bound at residue S221.

This sequence belongs to the cytochrome b family. In terms of assembly, the main subunits of the menaquinol:cytochrome c complex are a Rieske-type iron-sulfur protein (QcrA), a cytochrome b (QcrB) and a cytochrome c (QcrC). Heme b is required as a cofactor. The cofactor is heme c.

Its subcellular location is the cell membrane. Functionally, component of the menaquinol:cytochrome c reductase complex. The sequence is that of Menaquinol:cytochrome c reductase cytochrome b subunit (qcrB) from Geobacillus thermodenitrificans.